A 323-amino-acid polypeptide reads, in one-letter code: Aldo-keto reductase family 1 member C2 (323 aa).

Residues 20-24 (GFGTY) and aspartate 50 contribute to the NADP(+) site. Position 24 (tyrosine 24) interacts with substrate. The active-site Proton donor is tyrosine 55. Residue histidine 117 coordinates substrate. NADP(+) contacts are provided by residues 166-167 (SN), glutamine 190, and 216-222 (YSALGSH). Substrate is bound by residues histidine 222 and tryptophan 227. 270–280 (KSYNEQRIRQN) contributes to the NADP(+) binding site.

It belongs to the aldo/keto reductase family. As to expression, expressed in fetal testes. Expressed in fetal and adult adrenal glands.

The protein localises to the cytoplasm. It localises to the cytosol. It catalyses the reaction a 3alpha-hydroxysteroid + NADP(+) = a 3-oxosteroid + NADPH + H(+). The enzyme catalyses a 3alpha-hydroxysteroid + NAD(+) = a 3-oxosteroid + NADH + H(+). It carries out the reaction 5alpha-androstane-3alpha,17beta-diol + NADP(+) = 17beta-hydroxy-5alpha-androstan-3-one + NADPH + H(+). The catalysed reaction is 5alpha-androstane-3alpha,17beta-diol + NAD(+) = 17beta-hydroxy-5alpha-androstan-3-one + NADH + H(+). It catalyses the reaction 5alpha-androstane-3alpha,17beta-diol + NAD(+) = androsterone + NADH + H(+). The enzyme catalyses 17beta-estradiol + NADP(+) = estrone + NADPH + H(+). It carries out the reaction 17beta-estradiol + NAD(+) = estrone + NADH + H(+). The catalysed reaction is (20S)-hydroxypregn-4-en-3-one + NADP(+) = progesterone + NADPH + H(+). It catalyses the reaction (20S)-hydroxypregn-4-en-3-one + NAD(+) = progesterone + NADH + H(+). The enzyme catalyses androsterone + NADP(+) = 5alpha-androstan-3,17-dione + NADPH + H(+). It carries out the reaction (3beta,5alpha,17beta)-3-hydroxy-androstan-17-yl sulfate + NADP(+) = 5alpha-dihydrotestosterone sulfate + NADPH + H(+). The catalysed reaction is (1R,2R)-1,2-dihydrobenzene-1,2-diol + NADP(+) = catechol + NADPH + H(+). It catalyses the reaction (S)-indan-1-ol + NAD(+) = indan-1-one + NADH + H(+). The enzyme catalyses (S)-indan-1-ol + NADP(+) = indan-1-one + NADPH + H(+). Its pathway is steroid metabolism. With respect to regulation, inhibited by hexestrol with an IC(50) of 2.8 uM, 1,10-phenanthroline with an IC(50) of 2100 uM, 1,7-phenanthroline with an IC(50) of 1500 uM, flufenamic acid with an IC(50) of 0.9 uM, indomethacin with an IC(50) of 75 uM, ibuprofen with an IC(50) of 6.9 uM, lithocholic acid with an IC(50) of 0.07 uM, ursodeoxycholic acid with an IC(50) of 0.08 uM and chenodeoxycholic acid with an IC(50) of 0.13 uM. The oxidation reaction is inhibited by low micromolar concentrations of NADPH. Cytosolic aldo-keto reductase that catalyzes the NADH and NADPH-dependent reduction of ketosteroids to hydroxysteroids. Most probably acts as a reductase in vivo since the oxidase activity measured in vitro is inhibited by physiological concentrations of NADPH. Displays a broad positional specificity acting on positions 3, 17 and 20 of steroids and regulates the metabolism of hormones like estrogens and androgens. Works in concert with the 5-alpha/5-beta-steroid reductases to convert steroid hormones into the 3-alpha/5-alpha and 3-alpha/5-beta-tetrahydrosteroids. Catalyzes the inactivation of the most potent androgen 5-alpha-dihydrotestosterone (5-alpha-DHT) to 5-alpha-androstane-3-alpha,17-beta-diol (3-alpha-diol). Also specifically able to produce 17beta-hydroxy-5alpha-androstan-3-one/5alphaDHT. May also reduce conjugated steroids such as 5alpha-dihydrotestosterone sulfate. Displays affinity for bile acids. In Homo sapiens (Human), this protein is Aldo-keto reductase family 1 member C2 (AKR1C2).